The chain runs to 394 residues: 1-deoxy-D-xylulose 5-phosphate reductoisomerase (394 aa).

NADPH contacts are provided by Thr-12, Gly-13, Ser-14, Ile-15, Lys-39, Gln-40, and Asn-126. Residue Lys-127 participates in 1-deoxy-D-xylulose 5-phosphate binding. Glu-128 is an NADPH binding site. Position 152 (Asp-152) interacts with Mn(2+). The 1-deoxy-D-xylulose 5-phosphate site is built by Ser-153, Glu-154, Ser-183, and His-206. Position 154 (Glu-154) interacts with Mn(2+). Position 212 (Gly-212) interacts with NADPH. 1-deoxy-D-xylulose 5-phosphate contacts are provided by Ser-219, Asn-224, Lys-225, and Glu-228. Mn(2+) is bound at residue Glu-228.

Belongs to the DXR family. Mg(2+) is required as a cofactor. The cofactor is Mn(2+).

It carries out the reaction 2-C-methyl-D-erythritol 4-phosphate + NADP(+) = 1-deoxy-D-xylulose 5-phosphate + NADPH + H(+). It functions in the pathway isoprenoid biosynthesis; isopentenyl diphosphate biosynthesis via DXP pathway; isopentenyl diphosphate from 1-deoxy-D-xylulose 5-phosphate: step 1/6. Its function is as follows. Catalyzes the NADPH-dependent rearrangement and reduction of 1-deoxy-D-xylulose-5-phosphate (DXP) to 2-C-methyl-D-erythritol 4-phosphate (MEP). This chain is 1-deoxy-D-xylulose 5-phosphate reductoisomerase, found in Neisseria gonorrhoeae (strain ATCC 700825 / FA 1090).